The following is a 120-amino-acid chain: NAD(P)H-quinone oxidoreductase subunit 3, chloroplastic (120 aa).

The next 3 membrane-spanning stretches (helical) occupy residues 9-29 (IFWT…WISG), 64-84 (MFAL…PWAM), and 88-108 (VLGV…VVGL).

This sequence belongs to the complex I subunit 3 family. As to quaternary structure, NDH is composed of at least 16 different subunits, 5 of which are encoded in the nucleus.

The protein localises to the plastid. The protein resides in the chloroplast thylakoid membrane. It catalyses the reaction a plastoquinone + NADH + (n+1) H(+)(in) = a plastoquinol + NAD(+) + n H(+)(out). It carries out the reaction a plastoquinone + NADPH + (n+1) H(+)(in) = a plastoquinol + NADP(+) + n H(+)(out). In terms of biological role, NDH shuttles electrons from NAD(P)H:plastoquinone, via FMN and iron-sulfur (Fe-S) centers, to quinones in the photosynthetic chain and possibly in a chloroplast respiratory chain. The immediate electron acceptor for the enzyme in this species is believed to be plastoquinone. Couples the redox reaction to proton translocation, and thus conserves the redox energy in a proton gradient. The polypeptide is NAD(P)H-quinone oxidoreductase subunit 3, chloroplastic (Agrostis stolonifera (Creeping bentgrass)).